Here is a 550-residue protein sequence, read N- to C-terminus: Glucose-6-phosphate isomerase 1 (550 aa).

The Proton donor role is filled by E355. Catalysis depends on residues H386 and K512.

Belongs to the GPI family.

Its subcellular location is the cytoplasm. The catalysed reaction is alpha-D-glucose 6-phosphate = beta-D-fructose 6-phosphate. The protein operates within carbohydrate biosynthesis; gluconeogenesis. Its pathway is carbohydrate degradation; glycolysis; D-glyceraldehyde 3-phosphate and glycerone phosphate from D-glucose: step 2/4. Its function is as follows. Catalyzes the reversible isomerization of glucose-6-phosphate to fructose-6-phosphate. The sequence is that of Glucose-6-phosphate isomerase 1 from Rhodococcus jostii (strain RHA1).